Reading from the N-terminus, the 127-residue chain is Ribonuclease VapC6 (127 aa).

The 95-residue stretch at 26–120 (EPQRAEFCRS…ERHLPDIRVR (95 aa)) folds into the PINc domain. Aspartate 86 serves as a coordination point for Mg(2+).

The protein belongs to the PINc/VapC protein family. The cofactor is Mg(2+).

Functionally, toxic component of a type II toxin-antitoxin (TA) system. An RNase. The cognate antitoxin is VapB6. The protein is Ribonuclease VapC6 of Mycobacterium tuberculosis (strain CDC 1551 / Oshkosh).